A 488-amino-acid polypeptide reads, in one-letter code: UDP-N-acetylmuramate--L-alanine ligase (488 aa).

127–133 (GTHGKTT) contacts ATP.

It belongs to the MurCDEF family.

It localises to the cytoplasm. It carries out the reaction UDP-N-acetyl-alpha-D-muramate + L-alanine + ATP = UDP-N-acetyl-alpha-D-muramoyl-L-alanine + ADP + phosphate + H(+). It functions in the pathway cell wall biogenesis; peptidoglycan biosynthesis. Its function is as follows. Cell wall formation. This is UDP-N-acetylmuramate--L-alanine ligase from Shewanella oneidensis (strain ATCC 700550 / JCM 31522 / CIP 106686 / LMG 19005 / NCIMB 14063 / MR-1).